The chain runs to 147 residues: Hemoglobin subunit gamma-2 (147 aa).

A Globin domain is found at 3–147 (NFTAEDKAAI…VASALGSRYH (145 aa)). Thr-13 bears the Phosphothreonine mark. Ser-45, Ser-51, and Ser-53 each carry phosphoserine. An N6-acetyllysine modification is found at Lys-60. His-64 is a binding site for heme b. Lys-83 is subject to N6-acetyllysine. Residue His-93 coordinates heme b. An S-nitrosocysteine modification is found at Cys-94. 2 positions are modified to phosphoserine: Ser-140 and Ser-144.

The protein belongs to the globin family. As to quaternary structure, heterotetramer of two alpha chains and two gamma chains in fetal hemoglobin (Hb F). As to expression, red blood cells.

Its function is as follows. Gamma chains make up the fetal hemoglobin F, in combination with alpha chains. The protein is Hemoglobin subunit gamma-2 (HBG2) of Cebus albifrons (White-fronted capuchin).